The sequence spans 980 residues: MPAELLLLLIVAFASPSCQVLSSLRMAAILDDQTVCGRGERLALALAREQINGIIEVPAKARVEVDIFELQRDSQYETTDTMCQILPKGVVSVLGPSSSPASASTVSHICGEKEIPHIKVGPEETPRLQYLRFASVSLYPSNEDVSLAVSRILKSFNYPSASLICAKAECLLRLEELVRGFLISKETLSVRMLDDSRDPTPLLKEIRDDKVSTIIIDANASISHLILRKASELGMTSAFYKYILTTMDFPILHLDGIVEDSSNILGFSMFNTSHPFYPEFVRSLNMSWRENCEASTYLGPALSAALMFDAVHVVVSAVRELNRSQEIGVKPLACTSANIWPHGTSLMNYLRMVEYDGLTGRVEFNSKGQRTNYTLRILEKSRQGHREIGVWYSNRTLAMNATTLDINLSQTLANKTLVVTTILENPYVMRRPNFQALSGNERFEGFCVDMLRELAELLRFRYRLRLVEDGLYGAPEPNGSWTGMVGELINRKADLAVAAFTITAEREKVIDFSKPFMTLGISILYRVHMGRKPGYFSFLDPFSPAVWLFMLLAYLAVSCVLFLAARLSPYEWYNPHPCLRARPHILENQYTLGNSLWFPVGGFMQQGSEIMPRALSTRCVSGVWWAFTLIIISSYTANLAAFLTVQRMEVPVESADDLADQTNIEYGTIHAGSTMTFFQNSRYQTYQRMWNYMQSKQPSVFVKSTEEGIARVLNSRYAFLLESTMNEYHRRLNCNLTQIGGLLDTKGYGIGMPLGSPFRDEITLAILQLQENNRLEILKRKWWEGGRCPKEEDHRAKGLGMENIGGIFIVLICGLIIAVFVAVMEFIWSTRRSAESEEVSVCQEMLQELRHAVSCRKTSRSRRRRRPGGPSRALLSLRAVREMRLSNGKLYSAGAGGDAGSAHGGPQRLLDDPGPPSGARPAAPTPCTHVRVCQECRRIQALRASGAGAPPRGLGVPAEATSPPRPRPGPAGPRELAEHE.

An N-terminal signal peptide occupies residues 1-14; that stretch reads MPAELLLLLIVAFA. The Extracellular portion of the chain corresponds to 15–544; it reads SPSCQVLSSL…YFSFLDPFSP (530 aa). Disulfide bonds link Cys36/Cys292, Cys83/Cys334, and Cys165/Cys170. N-linked (GlcNAc...) asparagine glycosylation is found at Asn219, Asn271, Asn285, Asn322, Asn372, Asn394, Asn400, Asn407, Asn414, and Asn478. A helical membrane pass occupies residues 545–565; that stretch reads AVWLFMLLAYLAVSCVLFLAA. Over 566–622 the chain is Cytoplasmic; that stretch reads RLSPYEWYNPHPCLRARPHILENQYTLGNSLWFPVGGFMQQGSEIMPRALSTRCVSG. A helical membrane pass occupies residues 623 to 643; it reads VWWAFTLIIISSYTANLAAFL. Residues 644–803 are Extracellular-facing; it reads TVQRMEVPVE…HRAKGLGMEN (160 aa). Residue Asn735 is glycosylated (N-linked (GlcNAc...) asparagine). Residues 804-824 form a helical membrane-spanning segment; that stretch reads IGGIFIVLICGLIIAVFVAVM. Topologically, residues 825–980 are cytoplasmic; that stretch reads EFIWSTRRSA…AGPRELAEHE (156 aa). Disordered stretches follow at residues 891–927 and 944–980; these read YSAGAGGDAGSAHGGPQRLLDDPGPPSGARPAAPTPC and ASGAGAPPRGLGVPAEATSPPRPRPGPAGPRELAEHE. Residues 894–903 are compositionally biased toward gly residues; that stretch reads GAGGDAGSAH.

Belongs to the glutamate-gated ion channel (TC 1.A.10.1) family. GRIK5 subfamily. In terms of assembly, homotetramer. Heterotetramer with GRIK2. Can form functional heteromeric receptors with GRIK1 and GRIK2. Can form functional heteromeric receptors with GRIK3.

The protein resides in the cell membrane. Its subcellular location is the postsynaptic cell membrane. It localises to the presynaptic cell membrane. In terms of biological role, ionotropic glutamate receptor that functions as a cation-permeable ligand-gated ion channel, gated by L-glutamate and the glutamatergic agonist kainic acid. Cannot form functional channels on its own and produces channel activity only in heteromeric assembly with GRIK1 and GRIK2 subunits. Can form functional heteromeric receptors with GRIK3. In Homo sapiens (Human), this protein is Glutamate receptor ionotropic, kainate 5 (GRIK5).